Consider the following 941-residue polypeptide: MutS protein homolog 1 (941 aa).

Gly-747–Ser-754 contributes to the ATP binding site.

It belongs to the DNA mismatch repair MutS family.

It localises to the cytoplasm. Its subcellular location is the mitochondrion. Involved in mitochondrial DNA repair. This is MutS protein homolog 1 (msh1) from Schizosaccharomyces pombe (strain 972 / ATCC 24843) (Fission yeast).